The primary structure comprises 546 residues: CTP synthase (546 aa).

An amidoligase domain region spans residues Met1–Ile266. Ser14 serves as a coordination point for CTP. Ser14 serves as a coordination point for UTP. ATP is bound by residues Ser15–Ile20 and Asp72. Mg(2+) contacts are provided by Asp72 and Glu140. Residues Asp147–Glu149, Lys187–Gln192, and Lys223 contribute to the CTP site. UTP-binding positions include Lys187–Gln192 and Lys223. Residue Lys239–Val241 participates in ATP binding. The Glutamine amidotransferase type-1 domain occupies Thr291–Gly542. L-glutamine is bound at residue Gly352. The active-site Nucleophile; for glutamine hydrolysis is the Cys379. Residues Leu380–Gln383, Glu403, and Arg470 each bind L-glutamine. Catalysis depends on residues His515 and Glu517.

The protein belongs to the CTP synthase family. As to quaternary structure, homotetramer.

The enzyme catalyses UTP + L-glutamine + ATP + H2O = CTP + L-glutamate + ADP + phosphate + 2 H(+). The catalysed reaction is L-glutamine + H2O = L-glutamate + NH4(+). It carries out the reaction UTP + NH4(+) + ATP = CTP + ADP + phosphate + 2 H(+). It participates in pyrimidine metabolism; CTP biosynthesis via de novo pathway; CTP from UDP: step 2/2. With respect to regulation, allosterically activated by GTP, when glutamine is the substrate; GTP has no effect on the reaction when ammonia is the substrate. The allosteric effector GTP functions by stabilizing the protein conformation that binds the tetrahedral intermediate(s) formed during glutamine hydrolysis. Inhibited by the product CTP, via allosteric rather than competitive inhibition. In terms of biological role, catalyzes the ATP-dependent amination of UTP to CTP with either L-glutamine or ammonia as the source of nitrogen. Regulates intracellular CTP levels through interactions with the four ribonucleotide triphosphates. The chain is CTP synthase from Aliivibrio salmonicida (strain LFI1238) (Vibrio salmonicida (strain LFI1238)).